A 76-amino-acid chain; its full sequence is Paralithocin 3 (76 aa).

The first 23 residues, 1-23 (MGPMKVLLVMLVVMVAAPHIADA), serve as a signal peptide directing secretion. 4 disulfide bridges follow: C31–C62, C40–C58, C44–C56, and C49–C59. P74 carries the proline amide; partial modification.

This sequence belongs to the paralithocin family. Post-translationally, the amidated form is probably the active form.

In terms of biological role, has antibacterial activity, mainly against marine Gram-positive bacteria like C.maltaromaticum (MIC=25 uM), C.mobile (MIC=12.5 uM), C.divergens (MIC=25 uM) and C.funditum (MIC=12.5 uM) but also against C.glutamicum (MIC=12.5 uM). Has very little or no activity against Gram-negative bacteria. The protein is Paralithocin 3 of Paralithodes camtschaticus (Red king crab).